We begin with the raw amino-acid sequence, 208 residues long: Endo-1,4-beta-xylanase B (208 aa).

The first 16 residues, 1-16 (MKVTAAFAGLLATTLA), serve as a signal peptide directing secretion. A GH11 domain is found at 17–207 (APATELVTRS…GTGTASVTVS (191 aa)). Glutamate 101 (nucleophile) is an active-site residue. The active-site Proton donor is glutamate 194.

This sequence belongs to the glycosyl hydrolase 11 (cellulase G) family.

The protein localises to the secreted. The enzyme catalyses Endohydrolysis of (1-&gt;4)-beta-D-xylosidic linkages in xylans.. It participates in glycan degradation; xylan degradation. With respect to regulation, N-bromosuccinimide completely inhibits the catalytic activity. Functionally, endo-1,4-beta-xylanase involved in the hydrolysis of xylan, a major structural heterogeneous polysaccharide found in plant biomass representing the second most abundant polysaccharide in the biosphere, after cellulose. This Talaromyces purpureogenus (Soft rot fungus) protein is Endo-1,4-beta-xylanase B (xynB).